A 355-amino-acid chain; its full sequence is Protein RecA (355 aa).

73–80 (GPESSGKT) contacts ATP.

Belongs to the RecA family.

The protein localises to the cytoplasm. In terms of biological role, can catalyze the hydrolysis of ATP in the presence of single-stranded DNA, the ATP-dependent uptake of single-stranded DNA by duplex DNA, and the ATP-dependent hybridization of homologous single-stranded DNAs. It interacts with LexA causing its activation and leading to its autocatalytic cleavage. The protein is Protein RecA of Solidesulfovibrio magneticus (strain ATCC 700980 / DSM 13731 / RS-1) (Desulfovibrio magneticus).